Reading from the N-terminus, the 180-residue chain is Large ribosomal subunit protein uL5 (180 aa).

Belongs to the universal ribosomal protein uL5 family. In terms of assembly, part of the 50S ribosomal subunit; part of the 5S rRNA/L5/L18/L25 subcomplex. Contacts the 5S rRNA and the P site tRNA. Forms a bridge to the 30S subunit in the 70S ribosome.

Functionally, this is one of the proteins that bind and probably mediate the attachment of the 5S RNA into the large ribosomal subunit, where it forms part of the central protuberance. In the 70S ribosome it contacts protein S13 of the 30S subunit (bridge B1b), connecting the 2 subunits; this bridge is implicated in subunit movement. Contacts the P site tRNA; the 5S rRNA and some of its associated proteins might help stabilize positioning of ribosome-bound tRNAs. The chain is Large ribosomal subunit protein uL5 from Lactobacillus delbrueckii subsp. bulgaricus (strain ATCC 11842 / DSM 20081 / BCRC 10696 / JCM 1002 / NBRC 13953 / NCIMB 11778 / NCTC 12712 / WDCM 00102 / Lb 14).